We begin with the raw amino-acid sequence, 366 residues long: 3-dehydroquinate synthase (366 aa).

Residues 75-80 (DGEQYK), 109-113 (GVIGD), 133-134 (TT), K146, K155, and 173-176 (CLST) each bind NAD(+). Zn(2+) is bound by residues E188, H251, and H268.

It belongs to the sugar phosphate cyclases superfamily. Dehydroquinate synthase family. Co(2+) is required as a cofactor. It depends on Zn(2+) as a cofactor. NAD(+) serves as cofactor.

The protein resides in the cytoplasm. It carries out the reaction 7-phospho-2-dehydro-3-deoxy-D-arabino-heptonate = 3-dehydroquinate + phosphate. Its pathway is metabolic intermediate biosynthesis; chorismate biosynthesis; chorismate from D-erythrose 4-phosphate and phosphoenolpyruvate: step 2/7. Its function is as follows. Catalyzes the conversion of 3-deoxy-D-arabino-heptulosonate 7-phosphate (DAHP) to dehydroquinate (DHQ). The sequence is that of 3-dehydroquinate synthase from Vibrio campbellii (strain ATCC BAA-1116).